We begin with the raw amino-acid sequence, 715 residues long: MKVEELRIDERIKEVLKKRGISELYPPQAEALTSGILKGENALIAIPTASGKTLIAEIAIVNRLLKEGGKAVYLVPLKALAEEKFKEFKDWEELGLKVAMATGDYDSKDEWLGGYDIIIATAEKFDSLLRHGSSWIRNVKVLVVDEIHLIGSRDRGATLEFIITQMLNRAQIIGLSATIGNPEELAEWLNAKLIKSDWRPVKLRRGVFYQGFVFWEDGKTEKFNSWEELVYDAIKRSKGSLVFVNMRRKAEKTALELSKKIRNFLTKKELRELKELAESLEENPTNEKLAKALQGGVAFHHAGLGREERVLVEENFKKGLIKVVVATPTLSAGINTPAFRVIVRDTWRYSEFGMERIPILEIQQMMGRAGRPKYDEVGEAIIVSTTEEPSTVMERYIKGKPEKLFSQLSNESILRGQILALIATFNFSSFREIYDFLERTFYAYQGKDPYTLEDRIRDIVYFLLENEFIEITLDDEIKALPLGIRTAKLYIDPMTAKIFKDTLPKIEKDPNPLGILHVISLTPDLIPLPYGKKELPMLEDEYYSFKDRLYFELDWEDERKFLRAFKTALVLNAWINEVPEGEIVEKFNVEPGDIYRIVETAEWLVYSLKEIAKTLEYSQDVINYLETLRVRVKHGIREELIPLMELPMIGRKRARALYNAGFRDLESIKNARPAELLEVEGIGAKIVEAILKHLGREVKIVQKPRKGTLDYYLHP.

The Q motif motif lies at 1–29 (MKVEELRIDERIKEVLKKRGISELYPPQA). Residues Q28 and 46 to 53 (IPTASGKT) each bind ATP. A Helicase ATP-binding domain is found at 33–197 (TSGILKGENA…WLNAKLIKSD (165 aa)). The short motif at 145 to 148 (DEIH) is the DEAH box element. Positions 229-422 (LVYDAIKRSK…ILRGQILALI (194 aa)) constitute a Helicase C-terminal domain.

Belongs to the helicase family. Hel308 subfamily. In terms of assembly, monomer.

It carries out the reaction Couples ATP hydrolysis with the unwinding of duplex DNA by translocating in the 3'-5' direction.. The catalysed reaction is ATP + H2O = ADP + phosphate + H(+). Functionally, DNA-dependent ATPase and 3'-5' DNA helicase that may be involved in repair of stalled replication forks. The protein is ATP-dependent DNA helicase Hel308 of Pyrococcus horikoshii (strain ATCC 700860 / DSM 12428 / JCM 9974 / NBRC 100139 / OT-3).